A 430-amino-acid polypeptide reads, in one-letter code: Enolase (430 aa).

Residue Q166 participates in (2R)-2-phosphoglycerate binding. Catalysis depends on E208, which acts as the Proton donor. Mg(2+)-binding residues include D245, E288, and D315. (2R)-2-phosphoglycerate is bound by residues K340, R369, S370, and K391. Catalysis depends on K340, which acts as the Proton acceptor.

The protein belongs to the enolase family. Mg(2+) serves as cofactor.

It is found in the cytoplasm. The protein resides in the secreted. The protein localises to the cell surface. It carries out the reaction (2R)-2-phosphoglycerate = phosphoenolpyruvate + H2O. The protein operates within carbohydrate degradation; glycolysis; pyruvate from D-glyceraldehyde 3-phosphate: step 4/5. Its function is as follows. Catalyzes the reversible conversion of 2-phosphoglycerate (2-PG) into phosphoenolpyruvate (PEP). It is essential for the degradation of carbohydrates via glycolysis. The protein is Enolase of Clostridium beijerinckii (strain ATCC 51743 / NCIMB 8052) (Clostridium acetobutylicum).